Here is an 81-residue protein sequence, read N- to C-terminus: Sulfur carrier protein TusA (81 aa).

The active-site Cysteine persulfide intermediate is Cys-19.

It belongs to the sulfur carrier protein TusA family.

The protein resides in the cytoplasm. Its function is as follows. Sulfur carrier protein which probably makes part of a sulfur-relay system. This is Sulfur carrier protein TusA from Shewanella oneidensis (strain ATCC 700550 / JCM 31522 / CIP 106686 / LMG 19005 / NCIMB 14063 / MR-1).